Consider the following 104-residue polypeptide: Pyrimidine/purine nucleoside phosphorylase (104 aa).

This sequence belongs to the nucleoside phosphorylase PpnP family.

It carries out the reaction a purine D-ribonucleoside + phosphate = a purine nucleobase + alpha-D-ribose 1-phosphate. The catalysed reaction is adenosine + phosphate = alpha-D-ribose 1-phosphate + adenine. It catalyses the reaction cytidine + phosphate = cytosine + alpha-D-ribose 1-phosphate. The enzyme catalyses guanosine + phosphate = alpha-D-ribose 1-phosphate + guanine. It carries out the reaction inosine + phosphate = alpha-D-ribose 1-phosphate + hypoxanthine. The catalysed reaction is thymidine + phosphate = 2-deoxy-alpha-D-ribose 1-phosphate + thymine. It catalyses the reaction uridine + phosphate = alpha-D-ribose 1-phosphate + uracil. The enzyme catalyses xanthosine + phosphate = alpha-D-ribose 1-phosphate + xanthine. In terms of biological role, catalyzes the phosphorolysis of diverse nucleosides, yielding D-ribose 1-phosphate and the respective free bases. Can use uridine, adenosine, guanosine, cytidine, thymidine, inosine and xanthosine as substrates. Also catalyzes the reverse reactions. This chain is Pyrimidine/purine nucleoside phosphorylase, found in Colwellia psychrerythraea (strain 34H / ATCC BAA-681) (Vibrio psychroerythus).